A 369-amino-acid chain; its full sequence is Protein-glutamate methylesterase/protein-glutamine glutaminase (369 aa).

A Response regulatory domain is found at 4-121; that stretch reads KVLVVDDSSF…ARNRDEAVSL (118 aa). At D55 the chain carries 4-aspartylphosphate. The segment covering 146–171 has biased composition (low complexity); that stretch reads ATSSARPLASRTAAPAASAPARPATT. The tract at residues 146–175 is disordered; that stretch reads ATSSARPLASRTAAPAASAPARPATTKFRA. Positions 176–369 constitute a CheB-type methylesterase domain; the sequence is SGKKYQLTAI…ERMLVEVGLA (194 aa). Residues S188, H215, and D311 contribute to the active site.

The protein belongs to the CheB family. Post-translationally, phosphorylated by CheA. Phosphorylation of the N-terminal regulatory domain activates the methylesterase activity.

It is found in the cytoplasm. It carries out the reaction [protein]-L-glutamate 5-O-methyl ester + H2O = L-glutamyl-[protein] + methanol + H(+). It catalyses the reaction L-glutaminyl-[protein] + H2O = L-glutamyl-[protein] + NH4(+). Functionally, involved in chemotaxis. Part of a chemotaxis signal transduction system that modulates chemotaxis in response to various stimuli. Catalyzes the demethylation of specific methylglutamate residues introduced into the chemoreceptors (methyl-accepting chemotaxis proteins or MCP) by CheR. Also mediates the irreversible deamidation of specific glutamine residues to glutamic acid. The protein is Protein-glutamate methylesterase/protein-glutamine glutaminase of Vibrio parahaemolyticus serotype O3:K6 (strain RIMD 2210633).